A 354-amino-acid polypeptide reads, in one-letter code: Variable large protein 15/16 (354 aa).

A signal peptide spans 1-18; sequence MRKRISAIIMTLFMVLVS. Residue Cys-19 is the site of N-palmitoyl cysteine attachment. The S-diacylglycerol cysteine moiety is linked to residue Cys-19. Residues 333–354 are disordered; sequence EDKSVEATNTAEATTSGQQAKN. Residues 338–354 are compositionally biased toward polar residues; that stretch reads EATNTAEATTSGQQAKN.

It belongs to the variable large protein (Vlp) family. Delta subfamily.

It is found in the cell outer membrane. In terms of biological role, the Vlp and Vsp proteins are antigenically distinct proteins, only one vlp or vsp gene is transcriptionally active at any one time. Switching between these genes is a mechanism of host immune response evasion. This chain is Variable large protein 15/16, found in Borrelia hermsii.